The sequence spans 406 residues: Argininosuccinate synthase (406 aa).

Residues 11–19 (AYSGGLDTS) and Ala-38 contribute to the ATP site. L-citrulline is bound by residues Tyr-91 and Ser-96. Gly-121 is a binding site for ATP. L-aspartate is bound by residues Thr-123, Asn-127, and Asp-128. Asn-127 lines the L-citrulline pocket. L-citrulline contacts are provided by Arg-131, Ser-181, Ser-190, Glu-266, and Tyr-278.

Belongs to the argininosuccinate synthase family. Type 1 subfamily. In terms of assembly, homotetramer.

It localises to the cytoplasm. It carries out the reaction L-citrulline + L-aspartate + ATP = 2-(N(omega)-L-arginino)succinate + AMP + diphosphate + H(+). It functions in the pathway amino-acid biosynthesis; L-arginine biosynthesis; L-arginine from L-ornithine and carbamoyl phosphate: step 2/3. This chain is Argininosuccinate synthase, found in Campylobacter jejuni (strain RM1221).